A 368-amino-acid polypeptide reads, in one-letter code: Peptide chain release factor 2 (368 aa).

Q245 carries the post-translational modification N5-methylglutamine.

It belongs to the prokaryotic/mitochondrial release factor family. In terms of processing, methylated by PrmC. Methylation increases the termination efficiency of RF2.

It localises to the cytoplasm. Its function is as follows. Peptide chain release factor 2 directs the termination of translation in response to the peptide chain termination codons UGA and UAA. The sequence is that of Peptide chain release factor 2 (prfB) from Treponema pallidum (strain Nichols).